Consider the following 440-residue polypeptide: Thymidine phosphorylase (440 aa).

This sequence belongs to the thymidine/pyrimidine-nucleoside phosphorylase family. In terms of assembly, homodimer.

It carries out the reaction thymidine + phosphate = 2-deoxy-alpha-D-ribose 1-phosphate + thymine. It functions in the pathway pyrimidine metabolism; dTMP biosynthesis via salvage pathway; dTMP from thymine: step 1/2. Functionally, the enzymes which catalyze the reversible phosphorolysis of pyrimidine nucleosides are involved in the degradation of these compounds and in their utilization as carbon and energy sources, or in the rescue of pyrimidine bases for nucleotide synthesis. This chain is Thymidine phosphorylase, found in Rhizobium meliloti (strain 1021) (Ensifer meliloti).